The chain runs to 156 residues: Protein-export protein SecB (156 aa).

It belongs to the SecB family. As to quaternary structure, homotetramer, a dimer of dimers. One homotetramer interacts with 1 SecA dimer.

The protein resides in the cytoplasm. Its function is as follows. One of the proteins required for the normal export of preproteins out of the cell cytoplasm. It is a molecular chaperone that binds to a subset of precursor proteins, maintaining them in a translocation-competent state. It also specifically binds to its receptor SecA. The polypeptide is Protein-export protein SecB (Serratia proteamaculans (strain 568)).